A 1669-amino-acid chain; its full sequence is Collagen alpha-1(IV) chain (1669 aa).

The first 27 residues, Met1–Ala27, serve as a signal peptide directing secretion. Residues Lys28–Lys172 constitute a propeptide, N-terminal propeptide (7S domain). Residues Gln47–Asp1443 form a disordered region. Positions Thr92–Asn104 are enriched in low complexity. A glycan (N-linked (GlcNAc...) asparagine) is linked at Asn126. The interval Gly173–Pro1440 is triple-helical region. Residues Val196–Pro214 show a composition bias toward pro residues. 3-hydroxyproline occurs at positions 204, 207, and 210. Residues Gln234–Gln247 show a composition bias toward low complexity. Residues Pro289–Arg298 show a composition bias toward basic and acidic residues. Over residues Pro367–Pro376 the composition is skewed to pro residues. Positions Thr377 to Pro387 are enriched in low complexity. 2 stretches are compositionally biased toward pro residues: residues Pro413–Gln424 and Pro436–Pro448. A compositionally biased stretch (low complexity) spans Pro485–Pro494. 2 stretches are compositionally biased toward basic and acidic residues: residues Lys497–Leu508 and Phe535–Asp545. Positions Gly586–Gly595 are enriched in gly residues. 3-hydroxyproline occurs at positions 587 and 602. Pro603 is modified (4-hydroxyproline). The residue at position 605 (Pro605) is a 3-hydroxyproline. 4-hydroxyproline is present on Pro606. A compositionally biased stretch (low complexity) spans Ile611–Ala620. Residues Gly621–Gly630 show a composition bias toward gly residues. A 4-hydroxyproline mark is found at Pro623, Pro626, Pro629, and Pro632. Residue Pro647 is modified to 3-hydroxyproline. A compositionally biased stretch (low complexity) spans Arg715–Lys731. Residues Gly758 to Gly767 are compositionally biased toward gly residues. Pro residues predominate over residues Pro784–Gly802. The span at Pro803–Gly817 shows a compositional bias: gly residues. Composition is skewed to low complexity over residues Ser847–Pro875 and Asp994–Ser1003. Over residues Gly1011 to Gly1020 the composition is skewed to gly residues. 3-hydroxyproline is present on Pro1214. Positions Gln1220–Pro1230 are enriched in low complexity. The segment covering Pro1247–Phe1258 has biased composition (pro residues). The segment covering Gly1290–Gly1299 has biased composition (gly residues). Composition is skewed to low complexity over residues Asp1333–Gln1343, Pro1368–Leu1391, and Pro1398–Pro1412. Over residues Phe1413–Asp1428 the composition is skewed to pro residues. Pro1424 carries the post-translational modification 3-hydroxyproline. The Collagen IV NC1 domain maps to Gly1445–Thr1669. 6 disulfides stabilise this stretch: Cys1460–Cys1551, Cys1493–Cys1548, Cys1505–Cys1511, Cys1570–Cys1665, Cys1604–Cys1662, and Cys1616–Cys1622. Met1533 participates in a covalent cross-link: S-Lysyl-methionine sulfilimine (Met-Lys) (interchain with K-1651). Residue Lys1651 forms an S-Lysyl-methionine sulfilimine (Lys-Met) (interchain with M-1533) linkage.

Belongs to the type IV collagen family. There are six type IV collagen isoforms, alpha 1(IV)-alpha 6(IV), each of which can form a triple helix structure with 2 other chains to generate type IV collagen network. Interacts with EFEMP2. In terms of processing, lysines at the third position of the tripeptide repeating unit (G-X-Y) are hydroxylated. The modified lysines can be O-glycosylated. Contains 4-hydroxyproline. Prolines at the third position of the tripeptide repeating unit (G-X-Y) are hydroxylated in some or all of the chains. Post-translationally, contains 3-hydroxyproline. This modification occurs on the first proline residue in the sequence motif Gly-Pro-Hyp, where Hyp is 4-hydroxyproline. In terms of processing, type IV collagens contain numerous cysteine residues which are involved in inter- and intramolecular disulfide bonding. 12 of these, located in the NC1 domain, are conserved in all known type IV collagens. The trimeric structure of the NC1 domains is stabilized by covalent bonds (sulfilimine cross-links) between Lys and Met residues. These cross-links are important for the mechanical stability of the basement membrane. Sulfilimine cross-link is catalyzed by PXDN. Post-translationally, proteolytic processing produces the C-terminal NC1 peptide, arresten. Detected in the basement membrane of the cornea (at protein level).

It is found in the secreted. The protein resides in the extracellular space. The protein localises to the extracellular matrix. It localises to the basement membrane. In terms of biological role, type IV collagen is the major structural component of glomerular basement membranes (GBM), forming a 'chicken-wire' meshwork together with laminins, proteoglycans and entactin/nidogen. Its function is as follows. Arresten, comprising the C-terminal NC1 domain, inhibits angiogenesis and tumor formation. The C-terminal half is found to possess the anti-angiogenic activity. Specifically inhibits endothelial cell proliferation, migration and tube formation. This is Collagen alpha-1(IV) chain from Mus musculus (Mouse).